Here is a 540-residue protein sequence, read N- to C-terminus: [Co(II) methylated amine-specific corrinoid protein] reductase (540 aa).

4Fe-4S ferredoxin-type domains are found at residues 471-500 (IILE…IVER) and 504-535 (RIAK…ITKL). The [4Fe-4S] cluster site is built by Cys480, Cys483, Cys486, Cys490, Cys513, Cys518, Cys521, and Cys525.

Monomer. The cofactor is [4Fe-4S] cluster.

The catalysed reaction is 2 Co(II)-[methylamine-specific corrinoid protein] + AH2 + ATP + H2O = 2 Co(I)-[methylamine-specific corrinoid protein] + A + ADP + phosphate + 3 H(+). It catalyses the reaction 2 Co(II)-[dimethylamine-specific corrinoid protein] + AH2 + ATP + H2O = 2 Co(I)-[dimethylamine-specific corrinoid protein] + A + ADP + phosphate + 3 H(+). It carries out the reaction 2 Co(II)-[trimethylamine-specific corrinoid protein] + AH2 + ATP + H2O = 2 Co(I)-[trimethylamine-specific corrinoid protein] + A + ADP + phosphate + 3 H(+). Its pathway is one-carbon metabolism; methanogenesis from methylamine. It functions in the pathway one-carbon metabolism; methanogenesis from dimethylamine. It participates in one-carbon metabolism; methanogenesis from trimethylamine. Its function is as follows. Reductase required for the activation of corrinoid-dependent methylamine methyltransferase reactions during methanogenesis. Mediates the ATP-dependent reduction of corrinoid proteins from the inactive cobalt(II) state to the active cobalt(I) state. Acts on the corrinoid proteins involved in methanogenesis from monomethylamine (MMA), dimethylamine (DMA) and trimethylamine (TMA), namely MtmC, MtbC and MttC, respectively. This Methanosarcina barkeri protein is [Co(II) methylated amine-specific corrinoid protein] reductase.